A 151-amino-acid chain; its full sequence is Neuroglobin (151 aa).

Residues 1–149 enclose the Globin domain; the sequence is MERPEHELIR…VVQAMSRGWN (149 aa). The heme b site is built by H64 and H96.

Belongs to the globin family. In terms of assembly, monomer. Homodimer and homotetramer; disulfide-linked. Mainly monomeric but also detected as part of homodimers and homotetramers. Interacts with 14-3-3 proteins; regulates the phosphorylation of NGB. Could interact (ferrous form) with G-alpha(i) proteins (GTP-bound form). Post-translationally, phosphorylated during hypoxia by ERK1/ERK2. Phosphorylation regulates the heme pocket hexacoordination preventing the association of His-64 with the heme metal center. Thereby, promotes the access of dioxygen and nitrite to the heme and stimulates the nitrite reductase activity. Phosphorylation during hypoxia is stabilized by 14-3-3 proteins.

Its subcellular location is the cytoplasm. It is found in the cytosol. It localises to the mitochondrion matrix. The catalysed reaction is Fe(III)-heme b-[protein] + nitric oxide + H2O = Fe(II)-heme b-[protein] + nitrite + 2 H(+). Functionally, monomeric globin with a bis-histidyl six-coordinate heme-iron atom through which it can bind dioxygen, carbon monoxide and nitric oxide. Could help transport oxygen and increase its availability to the metabolically active neuronal tissues, though its low quantity in tissues as well as its high affinity for dioxygen, which may limit its oxygen-releasing ability, argue against it. The ferrous/deoxygenated form exhibits a nitrite reductase activity and it could produce nitric oxide which in turn inhibits cellular respiration in response to hypoxia. In its ferrous/deoxygenated state, it may also exhibit GDI (Guanine nucleotide Dissociation Inhibitor) activity toward heterotrimeric G-alpha proteins, thereby regulating signal transduction to facilitate neuroprotective responses in the wake of hypoxia and associated oxidative stress. This chain is Neuroglobin, found in Sus scrofa (Pig).